Here is a 242-residue protein sequence, read N- to C-terminus: NAD-dependent protein deacetylase (242 aa).

Residues methionine 1–lysine 242 enclose the Deacetylase sirtuin-type domain. NAD(+) is bound by residues alanine 23, threonine 27, phenylalanine 34, arginine 35, glutamine 102, isoleucine 104, aspartate 105, and histidine 120. Phenylalanine 34 provides a ligand contact to nicotinamide. The nicotinamide site is built by isoleucine 104 and aspartate 105. Histidine 120 acts as the Proton acceptor in catalysis. Cysteine 128, cysteine 131, cysteine 148, and cysteine 151 together coordinate Zn(2+). NAD(+)-binding residues include threonine 187, serine 188, asparagine 213, and isoleucine 231.

The protein belongs to the sirtuin family. Class U subfamily. Zn(2+) serves as cofactor.

The protein localises to the cytoplasm. It carries out the reaction N(6)-acetyl-L-lysyl-[protein] + NAD(+) + H2O = 2''-O-acetyl-ADP-D-ribose + nicotinamide + L-lysyl-[protein]. NAD-dependent protein deacetylase which modulates the activities of several enzymes which are inactive in their acetylated form. This chain is NAD-dependent protein deacetylase, found in Bacillus anthracis.